Consider the following 458-residue polypeptide: Transmembrane protein 143 (458 aa).

A run of 2 helical transmembrane segments spans residues 277-297 and 298-318; these read LLNL…GMVI and LSDL…FMGV. Ser329 is subject to Phosphoserine.

It is found in the membrane. The protein is Transmembrane protein 143 (Tmem143) of Mus musculus (Mouse).